Here is a 522-residue protein sequence, read N- to C-terminus: TNF receptor-associated factor 6 (522 aa).

The segment at 1–354 (MSLLNCENSC…EAQQCNGIYI (354 aa)) is interaction with TAX1BP1. Residues 70–109 (CPICLMALREAVQTPCGHRFCKACIIKSIRDAGHKCPVDN) form an RING-type zinc finger. A Glycyl lysine isopeptide (Lys-Gly) (interchain with G-Cter in SUMO); alternate cross-link involves residue Lys-124. Lys-124 is covalently cross-linked (Glycyl lysine isopeptide (Lys-Gly) (interchain with G-Cter in ubiquitin); alternate). Residue Lys-142 forms a Glycyl lysine isopeptide (Lys-Gly) (interchain with G-Cter in SUMO) linkage. 2 consecutive TRAF-type zinc fingers follow at residues 150 to 202 (DHQA…EDKE) and 203 to 259 (IHDQ…NHLA). The stretch at 288 to 348 (YISEVRNFQE…DKVAEIEAQQ (61 aa)) forms a coiled coil. A Glycyl lysine isopeptide (Lys-Gly) (interchain with G-Cter in ubiquitin) cross-link involves residue Lys-319. The MATH domain occupies 350 to 499 (NGIYIWKIGN…DDTLLVRCEV (150 aa)). Residues 355-522 (WKIGNFGMHL…FQPRSTDAGV (168 aa)) are interaction with TANK. Lys-453 is covalently cross-linked (Glycyl lysine isopeptide (Lys-Gly) (interchain with G-Cter in SUMO)).

It belongs to the TNF receptor-associated factor family. A subfamily. Homotrimer. Homooligomer. N-terminal region is dimeric while C-terminal region is trimeric; maybe providing a mode of oligomerization. Upon IL1B treatment, forms a complex with PELI1, IRAK1, IRAK4 and MYD88; this complex recruits MAP3K7/TAK1, TAB1 and TAB2 to mediate NF-kappa-B activation. Direct binding of SMAD6 to PELI1 prevents the complex formation and hence negatively regulates IL1R-TLR signaling and eventually NF-kappa-B-mediated gene expression. Binds to TNFRSF5/CD40 and TNFRSF11A/RANK. Associates with NGFR, TNFRSF17, IRAK2, IRAK3, RIPK2, MAP3K1, MAP3K5, MAP3K14, CSK, TRAF, TRAF-interacting protein TRIP and TNF receptor associated protein TDP2. Interacts with IL17R. Interacts with SQSTM1 bridging NTRK1 and NGFR. Forms a ternary complex with SQSTM1 and PRKCZ. Interacts with PELI2 and PELI3. Binds UBE2V1. Interacts with TAX1BP1; this interaction mediates deubiquitination of TRAF6 and inhibition of NF-kappa-B activation. Interacts with ZNF675. Interacts with ARRB1 and ARRB2. Interacts with MAP3K7 and TAB1/MAP3K7IP1; during IL-1 signaling. Interacts with UBE2N. Interacts with TGFBR1, HDAC1 and RANGAP1. Interacts with AKT1, AKT2 and AKT3. Interacts (via TRAF domains) with NUMBL (via C-terminal). Interacts with RBCK1. Interacts with LIMD1 (via LIM domains). Interacts with RSAD2/viperin. Interacts (via C-terminus) with EIF2AK2/PKR (via the kinase catalytic domain). Interacts with ZFAND5. Interacts with IL1RL1. Interacts with TRAFD1. Interacts with AJUBA. Interacts with MAVS/IPS1. Interacts (via TRAF domains) with DYNC2I2 (via WD domains). Interacts with IFIT3 (via N-terminus). Interacts with TICAM2. Interacts with CARD14. Interacts with CD40 and MAP3K8; the interaction is required for ERK activation. Interacts with TICAM1 and this interaction is enhanced in the presence of WDFY1. Interacts with TANK; this interaction increases in response to DNA damage. Interacts with USP10; this interaction increases in response to DNA damage. Interacts with ZC3H12A; this interaction increases in response to DNA damage and is stimulated by TANK. Interacts with WDFY3. Interacts with TRIM13. Interacts with GPS2. Interacts (via C-terminus) with SASH1. Interacts with LRRC19. Interacts with IL17RA and TRAF3IP2. Interacts with TOMM70. Interacts with AMBRA1; interaction is required to mediate 'Lys-63'-linked ubiquitination of ULK1. Interacts with CRBN; this interaction inhibits TLR4-mediated signaling by preventing TRAF6-mediated ubiquitination of ECSIT. Sumoylated on Lys-124, Lys-142 and Lys-453 with SUMO1. Post-translationally, polyubiquitinated on Lys-124 by TRAF3IP2; after cell stimulation with IL17A. Polyubiquitinated on Lys-124; after cell stimulation with IL1B or TGFB. This ligand-induced cell stimulation leads to dimerization/oligomerization of TRAF6 molecules, followed by auto-ubiquitination which involves UBE2N and UBE2V1 and leads to TRAF6 activation. This 'Lys-63' site-specific poly-ubiquitination appears to be associated with the activation of signaling molecules. Endogenous autoubiquitination occurs only for the cytoplasmic form. Deubiquitinated by USP10 in a TANK-dependent manner, leading to the negative regulation of NF-kappaB signaling upon DNA damage. LRRC19 induces 'Lys-63' ubiquitination. Ubiquitinated at Lys-319 by the SCF(FBXL2) complex, leading to its degradation by the proteasome. In terms of processing, (Microbial infection) Deubiquitinated by Epstein-Barr virus BPLF1 on both 'Lys-48' and 'Lys-63'-linked ubiquitin chains; leading to NF-kappa-B signaling inhibition. As to expression, expressed in heart, brain, placenta, lung, liver, skeletal muscle, kidney and pancreas.

It is found in the cytoplasm. The protein resides in the cell cortex. The protein localises to the nucleus. Its subcellular location is the lipid droplet. The enzyme catalyses S-ubiquitinyl-[E2 ubiquitin-conjugating enzyme]-L-cysteine + [acceptor protein]-L-lysine = [E2 ubiquitin-conjugating enzyme]-L-cysteine + N(6)-ubiquitinyl-[acceptor protein]-L-lysine.. It participates in protein modification; protein ubiquitination. E3 ubiquitin ligase that, together with UBE2N and UBE2V1, mediates the synthesis of 'Lys-63'-linked-polyubiquitin chains conjugated to proteins, such as ECSIT, IKBKG, IRAK1, AKT1 and AKT2. Also mediates ubiquitination of free/unanchored polyubiquitin chain that leads to MAP3K7 activation. Leads to the activation of NF-kappa-B and JUN. Seems to also play a role in dendritic cells (DCs) maturation and/or activation. Represses c-Myb-mediated transactivation, in B-lymphocytes. Adapter protein that seems to play a role in signal transduction initiated via TNF receptor, IL-1 receptor and IL-17 receptor. Regulates osteoclast differentiation by mediating the activation of adapter protein complex 1 (AP-1) and NF-kappa-B, in response to RANK-L stimulation. Together with MAP3K8, mediates CD40 signals that activate ERK in B-cells and macrophages, and thus may play a role in the regulation of immunoglobulin production. Acts as a regulator of the JNK and NF-kappa-B signaling pathways by initiating assembly of heterotypic 'Lys-63'-/'Lys-48'-linked branched ubiquitin chains that are then recognized by TAB2: TRAF6 catalyzes initial 'Lys-63'-linked-polyubiquitin chains that are then branched via 'Lys-48'-linked polyubiquitin by HUWE1. 'Lys-63'-/'Lys-48'-linked branched ubiquitin chains protect 'Lys-63'-linkages from CYLD deubiquitination. Participates also in the TCR signaling by ubiquitinating LAT. This Homo sapiens (Human) protein is TNF receptor-associated factor 6 (TRAF6).